The primary structure comprises 303 residues: tRNA dimethylallyltransferase (303 aa).

Glycine 9 to serine 16 contributes to the ATP binding site. Threonine 11–serine 16 provides a ligand contact to substrate. Positions aspartate 34–glutamine 37 are interaction with substrate tRNA.

The protein belongs to the IPP transferase family. As to quaternary structure, monomer. It depends on Mg(2+) as a cofactor.

The enzyme catalyses adenosine(37) in tRNA + dimethylallyl diphosphate = N(6)-dimethylallyladenosine(37) in tRNA + diphosphate. In terms of biological role, catalyzes the transfer of a dimethylallyl group onto the adenine at position 37 in tRNAs that read codons beginning with uridine, leading to the formation of N6-(dimethylallyl)adenosine (i(6)A). In Ehrlichia chaffeensis (strain ATCC CRL-10679 / Arkansas), this protein is tRNA dimethylallyltransferase.